The primary structure comprises 515 residues: ATP synthase subunit alpha (515 aa).

Residue 171–178 (GDRQTGKT) participates in ATP binding.

Belongs to the ATPase alpha/beta chains family. As to quaternary structure, F-type ATPases have 2 components, CF(1) - the catalytic core - and CF(0) - the membrane proton channel. CF(1) has five subunits: alpha(3), beta(3), gamma(1), delta(1), epsilon(1). CF(0) has three main subunits: a(1), b(2) and c(9-12). The alpha and beta chains form an alternating ring which encloses part of the gamma chain. CF(1) is attached to CF(0) by a central stalk formed by the gamma and epsilon chains, while a peripheral stalk is formed by the delta and b chains.

It localises to the cell inner membrane. The catalysed reaction is ATP + H2O + 4 H(+)(in) = ADP + phosphate + 5 H(+)(out). Its function is as follows. Produces ATP from ADP in the presence of a proton gradient across the membrane. The alpha chain is a regulatory subunit. The chain is ATP synthase subunit alpha from Xanthomonas campestris pv. campestris (strain 8004).